The following is a 25-amino-acid chain: RGSNLTIHPLRNIKDLVYLGNMGIG.

Asn-4 carries an N-linked (GlcNAc...) asparagine glycan.

This sequence belongs to the peptidase A1 family. Highly expressed in the placenta between day 60 and day 100 of gestation.

It is found in the secreted. Its subcellular location is the extracellular space. This is Pregnancy-associated glycoprotein 59g from Ovis aries (Sheep).